The following is a 336-amino-acid chain: tRNA N6-adenosine threonylcarbamoyltransferase (336 aa).

Fe cation-binding residues include H114 and H118. Residues 136–140, D169, G182, D186, and N275 each bind substrate; that span reads LVSGG. D301 contacts Fe cation.

Belongs to the KAE1 / TsaD family. The cofactor is Fe(2+).

The protein localises to the cytoplasm. It carries out the reaction L-threonylcarbamoyladenylate + adenosine(37) in tRNA = N(6)-L-threonylcarbamoyladenosine(37) in tRNA + AMP + H(+). Its function is as follows. Required for the formation of a threonylcarbamoyl group on adenosine at position 37 (t(6)A37) in tRNAs that read codons beginning with adenine. Is involved in the transfer of the threonylcarbamoyl moiety of threonylcarbamoyl-AMP (TC-AMP) to the N6 group of A37, together with TsaE and TsaB. TsaD likely plays a direct catalytic role in this reaction. The sequence is that of tRNA N6-adenosine threonylcarbamoyltransferase from Streptococcus mutans serotype c (strain ATCC 700610 / UA159).